We begin with the raw amino-acid sequence, 236 residues long: Probable transcriptional regulatory protein Suden_1389 (236 aa).

The protein belongs to the TACO1 family.

It localises to the cytoplasm. The protein is Probable transcriptional regulatory protein Suden_1389 of Sulfurimonas denitrificans (strain ATCC 33889 / DSM 1251) (Thiomicrospira denitrificans (strain ATCC 33889 / DSM 1251)).